A 1025-amino-acid polypeptide reads, in one-letter code: Interferon-induced helicase C domain-containing protein 1 (1025 aa).

2 consecutive CARD domains span residues 7–97 (AEDS…YVKP) and 110–190 (AHDE…QTGN). Residues K23 and K43 each participate in a glycyl lysine isopeptide (Lys-Gly) (interchain with G-Cter in ISG15) cross-link. Residues 273–297 (SLGHNSNMGRDSGTMGSDSDESVIQ) are disordered. Polar residues predominate over residues 275–297 (GHNSNMGRDSGTMGSDSDESVIQ). S289, S291, and S302 each carry phosphoserine. One can recognise a Helicase ATP-binding domain in the interval 317-510 (AQPALDGKNI…SEAEKHILNI (194 aa)). Phosphoserine occurs at positions 645 and 648. The Helicase C-terminal domain maps to 700–872 (KLIKLRNTIL…NMKPEEYAHK (173 aa)). S828 bears the Phosphoserine; by RIOK3 mark. One can recognise an RLR CTR domain in the interval 893-1020 (AKQYNDNPSL…PDLDYSEYCL (128 aa)). Residues C907, C910, C962, and C964 each contribute to the Zn(2+) site.

This sequence belongs to the helicase family. RLR subfamily. As to quaternary structure, monomer in the absence of ligands and homodimerizes in the presence of dsRNA ligands. Can assemble into helical or linear polymeric filaments on long dsRNA. Interacts with MAVS/IPS1. Interacts (via the CARD domains) with TKFC, the interaction is inhibited by viral infection. Interacts with PCBP2. Interacts with NLRC5. Interacts with PIAS2-beta. Interacts with DDX60. Interacts with ANKRD17. Interacts with IKBKE. Interacts with ATG5 and ATG12, either as ATG5 and ATG12 monomers or as ATG12-ATG5 conjugates. Interacts with ZCCHC3; leading to activate IFIH1/MDA5. Interacts with RNF123. Interacts with DDX3X. Interacts with NOD1; this interaction promotes transcription of antiviral genes and inhibition of viral replication. Interacts with ECSIT; this interaction bridges IFIH1 to the MAVS complex at the mitochondrion. In terms of processing, during apoptosis, processed into 3 cleavage products. The helicase-containing fragment, once liberated from the CARD domains, translocate from the cytoplasm to the nucleus. The processed protein significantly sensitizes cells to DNA degradation. Post-translationally, sumoylated. Sumoylation positively regulates its role in type I interferon induction and is enhanced by PIAS2-beta. Ubiquitinated by RNF125, leading to its degradation by the proteasome. USP17/UPS17L2-dependent deubiquitination positively regulates the receptor. Ubiquitinated by TRIM25 via 'Lys-63'-linked ubiquitination, promoting activation of IFIH1/MDA5. Ubiquitinated by TRIM40 via 'Lys-48'-linked ubiquitination; leading to proteasomal degradation. Ubiquitinated by TRIM65 via 'Lys-63'-linked ubiquitination, promoting activation of IFIH1/MDA5. In terms of processing, ISGylated by ISG15. ISGylation increases upon infection with viruses. ISGylation at Lys-23 and Lys-43 is dependent of dephosphorylation, regulates mitochondrial translocation and oligomerization. Essential for IFIH1/MDA5-mediated cytokine responses and restriction of virus replication. Post-translationally, phosphorylated. Dephosphorylated by phsophatases PP1; dephosphorylation precedes and is required for ISGylation. In terms of tissue distribution, expression is prominent in lung, liver, kidney, heart and spleen (at protein level). Widely expressed at low level.

It is found in the cytoplasm. The protein localises to the nucleus. The protein resides in the mitochondrion. The catalysed reaction is ATP + H2O = ADP + phosphate + H(+). Functionally, innate immune receptor which acts as a cytoplasmic sensor of viral nucleic acids and plays a major role in sensing viral infection and in the activation of a cascade of antiviral responses including the induction of type I interferons and pro-inflammatory cytokines. Its ligands include mRNA lacking 2'-O-methylation at their 5' cap and long-dsRNA (&gt;1 kb in length). Upon ligand binding it associates with mitochondria antiviral signaling protein (MAVS/IPS1) which activates the IKK-related kinases: TBK1 and IKBKE which phosphorylate interferon regulatory factors: IRF3 and IRF7 which in turn activate transcription of antiviral immunological genes, including interferons (IFNs); IFN-alpha and IFN-beta. Responsible for detecting the Picornaviridae family members such as encephalomyocarditis virus (EMCV), mengo encephalomyocarditis virus (ENMG), and theiler's murine encephalomyelitis virus (TMEV). Can also detect other viruses such as dengue virus (DENV), west Nile virus (WNV), and reovirus. Also involved in antiviral signaling in response to viruses containing a dsDNA genome, such as vaccinia virus. Plays an important role in amplifying innate immune signaling through recognition of RNA metabolites that are produced during virus infection by ribonuclease L (RNase L). May play an important role in enhancing natural killer cell function and may be involved in growth inhibition and apoptosis in several tumor cell lines. The chain is Interferon-induced helicase C domain-containing protein 1 from Mus musculus (Mouse).